The following is a 404-amino-acid chain: MKRTIIMMLDSFGVGASADAASFGDVGSDTFGHIAKACAEGKADIGREGPLKLPNLARLGLGHAAMESTGAFAPGFGDNVELIGAYGHAQELSSGKDTPSGHWEMAGVPVLFEWGYFSEHQNSFPKELTDKILARAGLDGFLGNCHASGTTILEELGEEHMRSGKPIFYTSADSVFQIACHEETFGLDNLYRLCEITREELAPYNIGRVIARPFNGTGPSDFARTGNRKDYSLEPPAKTVLDKLKAAGGEVVSVGKIADIYAYCGITKKVKANGLEDLFDATLAEVKSAGDNTIVFTNFVDFDSHYGHRRDVAGYAKGLEYFDARLPEMLALLGEDDLLILTADHGCDPTWQGTDHTREYVPVLAYGAGLKAGSLGRRNSFADIGQSIASHFKLEPMAYGESFI.

6 residues coordinate Mn(2+): Asp10, Asp303, His308, Asp344, His345, and His356.

Belongs to the phosphopentomutase family. Mn(2+) serves as cofactor.

The protein localises to the cytoplasm. The catalysed reaction is 2-deoxy-alpha-D-ribose 1-phosphate = 2-deoxy-D-ribose 5-phosphate. It catalyses the reaction alpha-D-ribose 1-phosphate = D-ribose 5-phosphate. It functions in the pathway carbohydrate degradation; 2-deoxy-D-ribose 1-phosphate degradation; D-glyceraldehyde 3-phosphate and acetaldehyde from 2-deoxy-alpha-D-ribose 1-phosphate: step 1/2. Functionally, isomerase that catalyzes the conversion of deoxy-ribose 1-phosphate (dRib-1-P) and ribose 1-phosphate (Rib-1-P) to deoxy-ribose 5-phosphate (dRib-5-P) and ribose 5-phosphate (Rib-5-P), respectively. This chain is Phosphopentomutase, found in Shewanella sp. (strain W3-18-1).